A 211-amino-acid chain; its full sequence is Dual specificity phosphatase 29 (211 aa).

One can recognise a Tyrosine-protein phosphatase domain in the interval 47 to 192 (HVNEVWPGIY…LRTLDIQLAI (146 aa)). 136-143 (HCAMGRSR) is a substrate binding site. Cys137 serves as the catalytic Phosphocysteine intermediate.

It belongs to the protein-tyrosine phosphatase family. Non-receptor class dual specificity subfamily.

The protein localises to the cytoplasm. Its subcellular location is the nucleus. It catalyses the reaction O-phospho-L-tyrosyl-[protein] + H2O = L-tyrosyl-[protein] + phosphate. It carries out the reaction O-phospho-L-seryl-[protein] + H2O = L-seryl-[protein] + phosphate. The catalysed reaction is O-phospho-L-threonyl-[protein] + H2O = L-threonyl-[protein] + phosphate. In terms of biological role, dual specificity phosphatase able to dephosphorylate phosphotyrosine, phosphoserine and phosphothreonine residues within the same substrate, with a preference for phosphotyrosine as a substrate. Involved in the modulation of AMPK and MAPK1/2 signaling pathways. The chain is Dual specificity phosphatase 29 (dusp29) from Callorhinchus milii (Ghost shark).